The following is a 502-amino-acid chain: ATP synthase subunit alpha (502 aa).

ATP is bound at residue 169 to 176 (GDRQTGKT).

It belongs to the ATPase alpha/beta chains family. As to quaternary structure, F-type ATPases have 2 components, CF(1) - the catalytic core - and CF(0) - the membrane proton channel. CF(1) has five subunits: alpha(3), beta(3), gamma(1), delta(1), epsilon(1). CF(0) has three main subunits: a(1), b(2) and c(9-12). The alpha and beta chains form an alternating ring which encloses part of the gamma chain. CF(1) is attached to CF(0) by a central stalk formed by the gamma and epsilon chains, while a peripheral stalk is formed by the delta and b chains.

Its subcellular location is the cell inner membrane. The catalysed reaction is ATP + H2O + 4 H(+)(in) = ADP + phosphate + 5 H(+)(out). In terms of biological role, produces ATP from ADP in the presence of a proton gradient across the membrane. The alpha chain is a regulatory subunit. This chain is ATP synthase subunit alpha, found in Geobacter sp. (strain M21).